The primary structure comprises 602 residues: Cytokine-like nuclear factor N-PAC (602 aa).

A phosphoserine mark is found at Ser8 and Ser10. Positions Pro22 to Pro81 constitute a PWWP domain. Residues Gly162 to Arg262 are disordered. Polar residues-rich tracts occupy residues Ala176–Val188, Ala204–Ser217, and Ser224–Ser233. Residues Ser224, Ser228, and Ser243 each carry the phosphoserine modification. The segment at Arg309 to Phe602 is dehydrogenase domain. NAD(+)-binding positions include Gly319–Asp333, Thr411, and Arg554.

Belongs to the HIBADH-related family. NP60 subfamily. In terms of assembly, binds to mononucleosomes. Interacts with male-specific lethal (MSL) histone acetyltransferase complex at least composed of mof, msl-1, msl-2 and msl-3.

It is found in the chromosome. Functionally, nucleosome-destabilizing factor that is recruited to genes during transcriptional activation and colocalizes with a subset of trimethylated 'Lys-36' histone H3 (H3K36me3)-enriched regions. Binds DNA (in vitro). Facilitates Pol II transcription through nucleosomes. Facilitates male-specific lethal (MSL) histone acetyltransferase complex targeting to active genes on the X chromosome. Stimulates the acetylation of 'Lys-56' of nucleosomal histone H3 (H3K56ac) by nej. May have oxidoreductase activity. This chain is Cytokine-like nuclear factor N-PAC, found in Drosophila melanogaster (Fruit fly).